A 179-amino-acid chain; its full sequence is Bifunctional protein PyrR (179 aa).

Positions 99–111 match the PRPP-binding motif; the sequence is VILIDDVLYTGRT.

It belongs to the purine/pyrimidine phosphoribosyltransferase family. PyrR subfamily. In terms of assembly, homodimer and homohexamer; in equilibrium.

The catalysed reaction is UMP + diphosphate = 5-phospho-alpha-D-ribose 1-diphosphate + uracil. In terms of biological role, regulates transcriptional attenuation of the pyrimidine nucleotide (pyr) operon by binding in a uridine-dependent manner to specific sites on pyr mRNA. This disrupts an antiterminator hairpin in the RNA and favors formation of a downstream transcription terminator, leading to a reduced expression of downstream genes. Functionally, also displays a weak uracil phosphoribosyltransferase activity which is not physiologically significant. The sequence is that of Bifunctional protein PyrR from Latilactobacillus sakei subsp. sakei (strain 23K) (Lactobacillus sakei subsp. sakei).